A 1150-amino-acid polypeptide reads, in one-letter code: C5a peptidase (1150 aa).

An N-terminal signal peptide occupies residues 1–31; that stretch reads MRKKQKLPFDKLAIALMSTSILLNAQSDIKA. The interval 33–73 is disordered; that stretch reads TVTEDTPAAEQAVETPQPTAVSEEVPSSKETKTPQTPDNAE. The 483-residue stretch at 99–581 folds into the Peptidase S8 domain; sequence KATIRDLNDP…AGAVDAKKAS (483 aa). Catalysis depends on charge relay system residues D130, H193, and S512. Composition is skewed to basic and acidic residues over residues 1029-1054 and 1061-1073; these read EGHS…KPEQ and PDKK…EKDS. The segment at 1029-1116 is disordered; it reads EGHSNKPEQD…RDQLPTTNDK (88 aa). 3 repeat units span residues 1034 to 1050, 1051 to 1067, and 1068 to 1084. The segment at 1034-1084 is 3 X 17 AA tandem repeats; it reads KPEQDGSDQAPDKKPEAKPEQDGSGQTPDKKPETKPEKDSSGQTPGKTPQK. Positions 1075–1089 are enriched in polar residues; that stretch reads GQTPGKTPQKGQPSR. The LPXTG sorting signal motif lies at 1110–1114; sequence LPTTN. Pentaglycyl murein peptidoglycan amidated threonine is present on T1113. The propeptide at 1114-1150 is removed by sortase; it reads NDKDTNRLHLLKLVMTTFFFGLVAHIFKTKRQKETKK.

This sequence belongs to the peptidase S8 family. Post-translationally, cleaved by SpeB protease; leading to its degradation. Degradation by SpeB is probably strictly regulated to preserve integrity of C5a peptidase.

The protein localises to the secreted. Its subcellular location is the cell wall. The catalysed reaction is The primary cleavage site is at 67-His-|-Lys-68 in human C5a with a minor secondary cleavage site at 58-Ala-|-Ser-59.. In terms of biological role, this virulence factor of S.pyogenes specifically cleaves the human serum chemotaxin C5a at '68-Lys-|-Asp-69' bond near its C-terminus, destroying its ability to serve as a chemoattractant. In Streptococcus pyogenes serotype M18 (strain MGAS8232), this protein is C5a peptidase (scpA).